The primary structure comprises 471 residues: Adenosylhomocysteinase (471 aa).

T60, D135, and E196 together coordinate substrate. T197–T199 contributes to the NAD(+) binding site. Substrate is bound by residues K226 and D230. Residues N231, G260–G265, E283, N318, I339–H341, and N387 contribute to the NAD(+) site.

It belongs to the adenosylhomocysteinase family. NAD(+) is required as a cofactor.

It localises to the cytoplasm. The catalysed reaction is S-adenosyl-L-homocysteine + H2O = L-homocysteine + adenosine. The protein operates within amino-acid biosynthesis; L-homocysteine biosynthesis; L-homocysteine from S-adenosyl-L-homocysteine: step 1/1. Its function is as follows. May play a key role in the regulation of the intracellular concentration of adenosylhomocysteine. The sequence is that of Adenosylhomocysteinase from Chlorobaculum tepidum (strain ATCC 49652 / DSM 12025 / NBRC 103806 / TLS) (Chlorobium tepidum).